The sequence spans 114 residues: T cell receptor beta variable 4-2 (114 aa).

Positions methionine 1–threonine 21 are cleaved as a signal peptide. Residues glycine 22–glutamine 114 form the Ig-like domain. Cysteine 42 and cysteine 110 are joined by a disulfide. 2 N-linked (GlcNAc...) asparagine glycosylation sites follow: asparagine 76 and asparagine 89.

In terms of assembly, alpha-beta TR is a heterodimer composed of an alpha and beta chain; disulfide-linked. The alpha-beta TR is associated with the transmembrane signaling CD3 coreceptor proteins to form the TR-CD3 (TcR or TCR). The assembly of alpha-beta TR heterodimers with CD3 occurs in the endoplasmic reticulum where a single alpha-beta TR heterodimer associates with one CD3D-CD3E heterodimer, one CD3G-CD3E heterodimer and one CD247 homodimer forming a stable octameric structure. CD3D-CD3E and CD3G-CD3E heterodimers preferentially associate with TR alpha and TR beta chains, respectively. The association of the CD247 homodimer is the last step of TcR assembly in the endoplasmic reticulum and is required for transport to the cell surface.

The protein localises to the cell membrane. Its function is as follows. V region of the variable domain of T cell receptor (TR) beta chain that participates in the antigen recognition. Alpha-beta T cell receptors are antigen specific receptors which are essential to the immune response and are present on the cell surface of T lymphocytes. Recognize peptide-major histocompatibility (MH) (pMH) complexes that are displayed by antigen presenting cells (APC), a prerequisite for efficient T cell adaptive immunity against pathogens. Binding of alpha-beta TR to pMH complex initiates TR-CD3 clustering on the cell surface and intracellular activation of LCK that phosphorylates the ITAM motifs of CD3G, CD3D, CD3E and CD247 enabling the recruitment of ZAP70. In turn ZAP70 phosphorylates LAT, which recruits numerous signaling molecules to form the LAT signalosome. The LAT signalosome propagates signal branching to three major signaling pathways, the calcium, the mitogen-activated protein kinase (MAPK) kinase and the nuclear factor NF-kappa-B (NF-kB) pathways, leading to the mobilization of transcription factors that are critical for gene expression and essential for T cell growth and differentiation. The T cell repertoire is generated in the thymus, by V-(D)-J rearrangement. This repertoire is then shaped by intrathymic selection events to generate a peripheral T cell pool of self-MH restricted, non-autoaggressive T cells. Post-thymic interaction of alpha-beta TR with the pMH complexes shapes TR structural and functional avidity. The sequence is that of T cell receptor beta variable 4-2 from Homo sapiens (Human).